The chain runs to 262 residues: Spindlin-W (262 aa).

The tract at residues 1 to 49 is disordered; the sequence is MKTPFGKSPAQRSRADAGHTRVSASMMKKRTSHKKHRNNVGPSKPISQP. Residues 27 to 38 show a composition bias toward basic residues; that stretch reads MKKRTSHKKHRN.

It belongs to the SPIN/STSY family. As to expression, expressed predominantly in ovarian granulosa and thecal cell.

It is found in the nucleus. May play a role in mitosis. The sequence is that of Spindlin-W (SPINW) from Gallus gallus (Chicken).